Reading from the N-terminus, the 218-residue chain is Glutathione S-transferase-like protein OpS6 (218 aa).

One can recognise a GST N-terminal domain in the interval 5–86 (QPIKLYAHKK…YLIEQYDKDG (82 aa)). The region spanning 92–218 (SLQDKSLARA…KIAATKAALA (127 aa)) is the GST C-terminal domain.

Belongs to the GST superfamily.

It participates in secondary metabolite biosynthesis. Glutathione S-transferase-like protein; part of the gene cluster that mediates the biosynthesis of the bibenzoquinone oosporein, a metabolite required for fungal virulence that acts by evading host immunity to facilitate fungal multiplication in insects. The non-reducing polyketide synthase OpS1 produces orsellinic acid by condensing acetyl-CoA with 3 malonyl-CoA units. Orsellinic acid is then hydroxylated to benzenetriol by the hydroxylase OpS4. The intermediate is oxidized either nonenzymatically to 5,5'-dideoxy-oosporein or enzymatically to benzenetetrol by the oxidoreductase OpS7. The latter is further dimerized to oosporein by the catalase OpS5. OpS6 probably functions en route for protecting cells against oxidative stress by scavenging any leaked free radical form of benzenetetrol by activating the thiol group of glutathione. The polypeptide is Glutathione S-transferase-like protein OpS6 (Beauveria bassiana (strain ARSEF 2860) (White muscardine disease fungus)).